The chain runs to 511 residues: Maturase K (511 aa).

This sequence belongs to the intron maturase 2 family. MatK subfamily.

The protein resides in the plastid. The protein localises to the chloroplast. Functionally, usually encoded in the trnK tRNA gene intron. Probably assists in splicing its own and other chloroplast group II introns. The sequence is that of Maturase K from Nandina domestica (Heavenly bamboo).